The primary structure comprises 204 residues: ATP-dependent Clp protease proteolytic subunit (204 aa).

Residue Ser-100 is the Nucleophile of the active site. His-125 is an active-site residue.

Belongs to the peptidase S14 family. As to quaternary structure, fourteen ClpP subunits assemble into 2 heptameric rings which stack back to back to give a disk-like structure with a central cavity, resembling the structure of eukaryotic proteasomes.

It localises to the cytoplasm. The enzyme catalyses Hydrolysis of proteins to small peptides in the presence of ATP and magnesium. alpha-casein is the usual test substrate. In the absence of ATP, only oligopeptides shorter than five residues are hydrolyzed (such as succinyl-Leu-Tyr-|-NHMec, and Leu-Tyr-Leu-|-Tyr-Trp, in which cleavage of the -Tyr-|-Leu- and -Tyr-|-Trp bonds also occurs).. In terms of biological role, cleaves peptides in various proteins in a process that requires ATP hydrolysis. Has a chymotrypsin-like activity. Plays a major role in the degradation of misfolded proteins. The protein is ATP-dependent Clp protease proteolytic subunit of Anaeromyxobacter sp. (strain Fw109-5).